Reading from the N-terminus, the 309-residue chain is Ribosomal RNA small subunit methyltransferase H (309 aa).

S-adenosyl-L-methionine contacts are provided by residues 44-46, D62, F102, D118, and Q125; that span reads GGH. A disordered region spans residues 289–309; that stretch reads LEQQRNSRARSAKLRVAARSS.

The protein belongs to the methyltransferase superfamily. RsmH family.

Its subcellular location is the cytoplasm. The enzyme catalyses cytidine(1402) in 16S rRNA + S-adenosyl-L-methionine = N(4)-methylcytidine(1402) in 16S rRNA + S-adenosyl-L-homocysteine + H(+). Functionally, specifically methylates the N4 position of cytidine in position 1402 (C1402) of 16S rRNA. The chain is Ribosomal RNA small subunit methyltransferase H from Synechococcus sp. (strain JA-3-3Ab) (Cyanobacteria bacterium Yellowstone A-Prime).